Consider the following 86-residue polypeptide: Small ribosomal subunit protein bS20 (86 aa).

It belongs to the bacterial ribosomal protein bS20 family.

Functionally, binds directly to 16S ribosomal RNA. The sequence is that of Small ribosomal subunit protein bS20 from Rhodococcus opacus (strain B4).